Here is a 343-residue protein sequence, read N- to C-terminus: S-adenosylmethionine:tRNA ribosyltransferase-isomerase (343 aa).

The protein belongs to the QueA family. In terms of assembly, monomer.

It localises to the cytoplasm. The enzyme catalyses 7-aminomethyl-7-carbaguanosine(34) in tRNA + S-adenosyl-L-methionine = epoxyqueuosine(34) in tRNA + adenine + L-methionine + 2 H(+). The protein operates within tRNA modification; tRNA-queuosine biosynthesis. Functionally, transfers and isomerizes the ribose moiety from AdoMet to the 7-aminomethyl group of 7-deazaguanine (preQ1-tRNA) to give epoxyqueuosine (oQ-tRNA). The chain is S-adenosylmethionine:tRNA ribosyltransferase-isomerase from Coxiella burnetii (strain Dugway 5J108-111).